The chain runs to 360 residues: MRTELFDFDLPAENIALRPVSPRDAARMLVVRPGAPLEDRIVRDLPALLAPGDQLVVNDTRVIAAQLTGRRIGRGLEPKIEATLIKRLDGARWQALVKPAKKLLPGDVVRFGHDGRVCLLGHLDATVEAKGDAGEVTLVFSFHGPVLDQAIAEVGATPLPPYIASKRAPDAQDIADYQTMFASNEGAVAAPTAGLHFTAELETALAACGVGLHRITLHVGAGTFLPVKAEDTSEHRMHAEWGTISSGTAEALNAARAAGGRIVAVGTTSLRLLESAARDDGRIAPFADETSIFITPGYRFRAVDVLMTNFHLPRSTLFMLVSAFCGLDTMQAAYAHAIRTGYRFYSYGDASLLFRNDITP.

Belongs to the QueA family. In terms of assembly, monomer.

Its subcellular location is the cytoplasm. It carries out the reaction 7-aminomethyl-7-carbaguanosine(34) in tRNA + S-adenosyl-L-methionine = epoxyqueuosine(34) in tRNA + adenine + L-methionine + 2 H(+). It functions in the pathway tRNA modification; tRNA-queuosine biosynthesis. In terms of biological role, transfers and isomerizes the ribose moiety from AdoMet to the 7-aminomethyl group of 7-deazaguanine (preQ1-tRNA) to give epoxyqueuosine (oQ-tRNA). The protein is S-adenosylmethionine:tRNA ribosyltransferase-isomerase of Rhodopseudomonas palustris (strain ATCC BAA-98 / CGA009).